The primary structure comprises 202 residues: FMN-dependent NADH:quinone oxidoreductase (202 aa).

FMN is bound by residues Ser10 and 95-98 (MYNF).

It belongs to the azoreductase type 1 family. Homodimer. It depends on FMN as a cofactor.

The enzyme catalyses 2 a quinone + NADH + H(+) = 2 a 1,4-benzosemiquinone + NAD(+). The catalysed reaction is N,N-dimethyl-1,4-phenylenediamine + anthranilate + 2 NAD(+) = 2-(4-dimethylaminophenyl)diazenylbenzoate + 2 NADH + 2 H(+). Quinone reductase that provides resistance to thiol-specific stress caused by electrophilic quinones. Functionally, also exhibits azoreductase activity. Catalyzes the reductive cleavage of the azo bond in aromatic azo compounds to the corresponding amines. This Alkalilimnicola ehrlichii (strain ATCC BAA-1101 / DSM 17681 / MLHE-1) protein is FMN-dependent NADH:quinone oxidoreductase.